The following is a 158-amino-acid chain: Ribonuclease H (158 aa).

The RNase H type-1 domain occupies 2-143 (PEKIIELFTD…VDALLNRVMD (142 aa)). The Mg(2+) site is built by Asp-11, Glu-49, Asp-71, and Asp-135.

The protein belongs to the RNase H family. Monomer. The cofactor is Mg(2+).

Its subcellular location is the cytoplasm. The enzyme catalyses Endonucleolytic cleavage to 5'-phosphomonoester.. Its function is as follows. Endonuclease that specifically degrades the RNA of RNA-DNA hybrids. This Acidithiobacillus ferrooxidans (strain ATCC 23270 / DSM 14882 / CIP 104768 / NCIMB 8455) (Ferrobacillus ferrooxidans (strain ATCC 23270)) protein is Ribonuclease H.